Reading from the N-terminus, the 315-residue chain is Manganese-dependent 2,3-dihydroxybiphenyl 1,2-dioxygenase (315 aa).

2 VOC domains span residues 7 to 121 (KFGH…IYYD) and 150 to 273 (RIDH…LFSG). 3 residues coordinate Mn(2+): His153, His216, and Glu269.

The protein belongs to the extradiol ring-cleavage dioxygenase family. In terms of assembly, homotetramer. Mn(2+) serves as cofactor.

It carries out the reaction biphenyl-2,3-diol + O2 = 2-hydroxy-6-oxo-6-phenylhexa-2,4-dienoate + H(+). The protein operates within xenobiotic degradation; biphenyl degradation; 2-hydroxy-2,4-pentadienoate and benzoate from biphenyl: step 3/4. Its function is as follows. Catalyzes the meta-cleavage of the hydroxylated biphenyl ring. The enzyme can oxidize a wide range of substrates, and the substrate preference order is 2,3-dihydroxybiphenyl &gt; 3-methylcatechol &gt; catechol &gt; 4-methylcatechol &gt; 4-chlorocatechol. This Geobacillus genomosp. 3 protein is Manganese-dependent 2,3-dihydroxybiphenyl 1,2-dioxygenase (bphC).